Consider the following 130-residue polypeptide: MARQSKRLAPRRLKRKVSKGVVHIQASFNNTIVTITDSSGGVLAWSSAGACGFRGAKKGTPFAAQTAAETAIRQCIDQGMRQADIIVQGPGNGRETAIRALQLAGVGVSLIRDITSVPHNGCRPPKQRRI.

The protein belongs to the universal ribosomal protein uS11 family. As to quaternary structure, part of the 30S ribosomal subunit.

The protein resides in the plastid. It localises to the chloroplast. The chain is Small ribosomal subunit protein uS11c from Nephroselmis olivacea (Green alga).